The primary structure comprises 157 residues: NAD(P)H-quinone oxidoreductase subunit N (157 aa).

It belongs to the complex I NdhN subunit family. In terms of assembly, NDH-1 can be composed of about 15 different subunits; different subcomplexes with different compositions have been identified which probably have different functions.

It is found in the cellular thylakoid membrane. The enzyme catalyses a plastoquinone + NADH + (n+1) H(+)(in) = a plastoquinol + NAD(+) + n H(+)(out). It catalyses the reaction a plastoquinone + NADPH + (n+1) H(+)(in) = a plastoquinol + NADP(+) + n H(+)(out). NDH-1 shuttles electrons from an unknown electron donor, via FMN and iron-sulfur (Fe-S) centers, to quinones in the respiratory and/or the photosynthetic chain. The immediate electron acceptor for the enzyme in this species is believed to be plastoquinone. Couples the redox reaction to proton translocation, and thus conserves the redox energy in a proton gradient. Cyanobacterial NDH-1 also plays a role in inorganic carbon-concentration. This Picosynechococcus sp. (strain ATCC 27264 / PCC 7002 / PR-6) (Agmenellum quadruplicatum) protein is NAD(P)H-quinone oxidoreductase subunit N.